The chain runs to 341 residues: DNA-directed RNA polymerase subunit alpha (341 aa).

The tract at residues 1–233 (MVREEVAGST…DLFLPFLHAE (233 aa)) is alpha N-terminal domain (alpha-NTD). Residues 269 to 341 (IPLNCIFIDQ…IDLLKNKLSF (73 aa)) form an alpha C-terminal domain (alpha-CTD) region.

It belongs to the RNA polymerase alpha chain family. In plastids the minimal PEP RNA polymerase catalytic core is composed of four subunits: alpha, beta, beta', and beta''. When a (nuclear-encoded) sigma factor is associated with the core the holoenzyme is formed, which can initiate transcription.

It localises to the plastid. The protein resides in the chloroplast. The catalysed reaction is RNA(n) + a ribonucleoside 5'-triphosphate = RNA(n+1) + diphosphate. DNA-dependent RNA polymerase catalyzes the transcription of DNA into RNA using the four ribonucleoside triphosphates as substrates. This chain is DNA-directed RNA polymerase subunit alpha, found in Lolium perenne (Perennial ryegrass).